We begin with the raw amino-acid sequence, 616 residues long: MAWGLFQILMISFFHLIKLSSQQETSFVYETFRSQENLYLDGSATVLPNGLLQLTNASDHQMAHVFYKDSIELSSSKPLSFSTHFVCALVPQPGVEGGHGMAFVVSPSMDFSHAESTRYLGIFNVSKNGSPSSNVLAVELDTIWNPDFEDIDHNHVGIDVNSPLSVGTASASYYSDIKGKNESINLLSGHPIQVWVDYEDNMLNVSMAPREVQKPSRPLLSQHINLSDIYPNRRLFVGFSAATGTAISYQYVLSWSFSTSRGSLQRFDISRLPEVPHPRAEHKNLSPLFIDLLGFLAIMGLCTLTGMYFFKRGKYAEITEEWENEFGAHRFSYKSLYKATKGFHKDGFLGKGGFGEVYRGKLLLSREKAVKRMSHDGDQGLKQFVAEVVSMRCLKHRNLVPLLGYCRRKHEFLLVSDYMTNGSLDEHLFDDQKPVLSWPQRLVIIKGIASALCYLHTGADQVVLHRDIKASNIMLDAEFNGRLGDFGMASFHDHGGISDSTCAVGTIGYMAPEILYMGASTRTDVYAFGVFMVEVTCGRRPVEPQLQLEKQILIEWVPESRPTMEQVILYLNQNLPLPDFSPYTVGISNHSSVLIDAASLVASRSWSAASSATNSP.

The first 22 residues, 1 to 22 (MAWGLFQILMISFFHLIKLSSQ), serve as a signal peptide directing secretion. Residues 23–288 (QETSFVYETF…RAEHKNLSPL (266 aa)) lie on the Extracellular side of the membrane. A legume-lectin like region spans residues 24–258 (ETSFVYETFR…YQYVLSWSFS (235 aa)). Asn56, Asn124, Asn181, Asn204, and Asn225 each carry an N-linked (GlcNAc...) asparagine glycan. Residues 289–309 (FIDLLGFLAIMGLCTLTGMYF) traverse the membrane as a helical segment. Over 310–616 (FKRGKYAEIT…SAASSATNSP (307 aa)) the chain is Cytoplasmic. The Protein kinase domain occupies 343-616 (FHKDGFLGKG…SAASSATNSP (274 aa)). ATP-binding positions include 349–357 (LGKGGFGEV) and Lys371. Asp467 serves as the catalytic Proton acceptor.

It in the C-terminal section; belongs to the protein kinase superfamily. Ser/Thr protein kinase family. The protein in the N-terminal section; belongs to the leguminous lectin family.

The protein resides in the cell membrane. It catalyses the reaction L-seryl-[protein] + ATP = O-phospho-L-seryl-[protein] + ADP + H(+). The catalysed reaction is L-threonyl-[protein] + ATP = O-phospho-L-threonyl-[protein] + ADP + H(+). The sequence is that of Putative L-type lectin-domain containing receptor kinase I.10 (LECRK110) from Arabidopsis thaliana (Mouse-ear cress).